The sequence spans 96 residues: Small ribosomal subunit protein bS6 (96 aa).

It belongs to the bacterial ribosomal protein bS6 family.

Binds together with bS18 to 16S ribosomal RNA. This chain is Small ribosomal subunit protein bS6 (rpsF), found in Streptomyces coelicolor (strain ATCC BAA-471 / A3(2) / M145).